Here is a 354-residue protein sequence, read N- to C-terminus: cAMP-dependent protein kinase catalytic subunit 2 (354 aa).

The Protein kinase domain maps to tyrosine 45–phenylalanine 301. ATP contacts are provided by residues leucine 51–valine 59 and lysine 74. The active-site Proton acceptor is the aspartate 168. The AGC-kinase C-terminal domain occupies glutamine 302–phenylalanine 354.

Belongs to the protein kinase superfamily. AGC Ser/Thr protein kinase family. cAMP subfamily. In terms of tissue distribution, more abundant in adult body than adult head.

It catalyses the reaction L-seryl-[protein] + ATP = O-phospho-L-seryl-[protein] + ADP + H(+). It carries out the reaction L-threonyl-[protein] + ATP = O-phospho-L-threonyl-[protein] + ADP + H(+). The polypeptide is cAMP-dependent protein kinase catalytic subunit 2 (Pka-C2) (Drosophila melanogaster (Fruit fly)).